The primary structure comprises 1166 residues: Myosin-1 (1166 aa).

A compositionally biased stretch (polar residues) spans 1 to 13 (MSQKVTPFMQSLK). A disordered region spans residues 1–71 (MSQKVTPFMQ…AGDSEDSPYS (71 aa)). A Phosphoserine modification is found at Ser-14. Polar residues predominate over residues 32–45 (NSSGASVRLTNSNV). The 50-residue stretch at 112–161 (KKILQSWIQLPNGNWELGKILSTSGEESVISLPEGKVIKVISETLVPANP) folds into the Myosin N-terminal SH3-like domain. One can recognise a Myosin motor domain in the interval 165-837 (DGVDDLMQLS…QIGVLEDTRN (673 aa)). Residues 256–263 (GESGAGKT) and 304–312 (NDNSSRFGK) each bind ATP. 2 actin-binding regions span residues 589–623 (LFEKKPLGLLSLLDEESTFPNGTDLTLANKLKQHL) and 717–739 (LFQLMQRLGNTTPHFIRCIKPNN). 4 consecutive IQ domains span residues 839–868 (TLHGILRVQSSFRGYQARCLLKELKRGISI), 862–891 (LKRGISILQSFVRGEKIRKEFAELRRRHKA), 888–917 (RHKAAATIQSQVKSKIARIQYKGIADASVV), and 911–940 (IADASVVIQSAIRGWLVRRCSGDIGWLKSG). Positions 955–1005 (SVLSELQRRVLKAEAALREKEEENDILQQRLQQYENRWSEYETKMKSMEEI) form a coiled coil. Positions 1030-1065 (ARNSDASVNASDATDWDSSSNQFRSQTSNGVGSRLQ) are disordered. A compositionally biased stretch (polar residues) spans 1032–1060 (NSDASVNASDATDWDSSSNQFRSQTSNGV).

The protein belongs to the TRAFAC class myosin-kinesin ATPase superfamily. Myosin family. Plant myosin class VIII subfamily. Homodimer.

Its subcellular location is the cell junction. The protein resides in the plasmodesma. It is found in the cytoplasm. It localises to the cytoskeleton. The protein localises to the phragmoplast. Its subcellular location is the endosome. The protein resides in the endoplasmic reticulum. Functionally, myosin heavy chain that is required for the cell cycle-regulated transport of various organelles and proteins for their segregation. Functions by binding with its tail domain to receptor proteins on organelles and exerting force with its N-terminal motor domain against actin filaments, thereby transporting its cargo along polarized actin cables. Involved in endocytosis via its action in endosomal trafficking. In Arabidopsis thaliana (Mouse-ear cress), this protein is Myosin-1 (VIII-1).